Reading from the N-terminus, the 207-residue chain is High frequency lysogenization protein HflD homolog (207 aa).

Belongs to the HflD family.

The protein resides in the cytoplasm. Its subcellular location is the cell inner membrane. This is High frequency lysogenization protein HflD homolog from Pseudomonas fluorescens (strain SBW25).